The sequence spans 156 residues: Small ribosomal subunit protein uS7 (156 aa).

Belongs to the universal ribosomal protein uS7 family. In terms of assembly, part of the 30S ribosomal subunit. Contacts proteins S9 and S11.

Its function is as follows. One of the primary rRNA binding proteins, it binds directly to 16S rRNA where it nucleates assembly of the head domain of the 30S subunit. Is located at the subunit interface close to the decoding center, probably blocks exit of the E-site tRNA. This chain is Small ribosomal subunit protein uS7, found in Neisseria meningitidis serogroup C (strain 053442).